The primary structure comprises 315 residues: Homoserine kinase (315 aa).

ATP is bound at residue 97–107 (PPARGLGSSAT).

The protein belongs to the GHMP kinase family. Homoserine kinase subfamily.

It localises to the cytoplasm. It carries out the reaction L-homoserine + ATP = O-phospho-L-homoserine + ADP + H(+). It participates in amino-acid biosynthesis; L-threonine biosynthesis; L-threonine from L-aspartate: step 4/5. Catalyzes the ATP-dependent phosphorylation of L-homoserine to L-homoserine phosphate. The sequence is that of Homoserine kinase from Prochlorococcus marinus (strain NATL2A).